The sequence spans 148 residues: MRLTKFTDLALRSLMRLAVVRDGDEPLATREVAEVVGVPYTHAAKAITRLQHLGVVEARRGRGGGLTLTDLGRRVSVGWLVRELEGEAEVVDCEGDNPCPLRGACRLRRALRDAQEAFYAALDPLTVTDLVAAPTGPVLLGLTDRPSG.

The HTH rrf2-type domain maps to 2–132; the sequence is RLTKFTDLAL…DPLTVTDLVA (131 aa). The H-T-H motif DNA-binding region spans 29–52; it reads TREVAEVVGVPYTHAAKAITRLQH. [2Fe-2S] cluster contacts are provided by Cys-93, Cys-99, and Cys-105.

As to quaternary structure, homodimer. It depends on [2Fe-2S] cluster as a cofactor.

Its function is as follows. Binds DNA; this binding is disrupted by nitrosylation upon exposure to nitric oxide (NO) and also by EDTA and iron chelators. The 2Fe-2S cluster is stable in the presence of O(2). This chain is HTH-type transcriptional repressor NsrR (nsrR), found in Streptomyces coelicolor (strain ATCC BAA-471 / A3(2) / M145).